The sequence spans 350 residues: UDP-N-acetylenolpyruvoylglucosamine reductase (350 aa).

The 172-residue stretch at 24–195 folds into the FAD-binding PCMH-type domain; it reads HVDATARWLL…VAVEFNLPLL (172 aa). Arginine 172 is an active-site residue. Serine 245 (proton donor) is an active-site residue. Glutamate 342 is an active-site residue.

The protein belongs to the MurB family. It depends on FAD as a cofactor.

The protein resides in the cytoplasm. It catalyses the reaction UDP-N-acetyl-alpha-D-muramate + NADP(+) = UDP-N-acetyl-3-O-(1-carboxyvinyl)-alpha-D-glucosamine + NADPH + H(+). It participates in cell wall biogenesis; peptidoglycan biosynthesis. Cell wall formation. The sequence is that of UDP-N-acetylenolpyruvoylglucosamine reductase from Xanthomonas campestris pv. campestris (strain B100).